A 321-amino-acid chain; its full sequence is Protein stand still (321 aa).

Coiled-coil stretches lie at residues 74–103 and 147–167; these read KLHEMKVAALEERRDRIMKNRRFAKSRKKA and KQEQEGATRKLEDSTSDKANL. The span at 146-162 shows a compositional bias: basic and acidic residues; that stretch reads HKQEQEGATRKLEDSTS. 2 disordered regions span residues 146-166 and 227-248; these read HKQEQEGATRKLEDSTSDKAN and QVPPVQGESKSSGSLASSMEDV. Over residues 235–244 the composition is skewed to low complexity; it reads SKSSGSLASS. The stretch at 272–292 forms a coiled coil; sequence QRDVLQRLERSMAQISQELHC.

Germ cells specific. Expressed in all germ cells. During the first instar larvae, it is expressed in all germ cells of both sexes. In third instar larvae, it decreases in male germ cells while it remains in female germ cells. In adult ovary, it is expressed in cells of the germarium, including the stem cells. In the early previtellogenic stages, it is highly expressed in the nurse cells. During vitellogenesis, it is not translocated into the maturing egg. In testes, it is only expressed during some steps of male germline differentiation. At the apex testis, it is expressed at low level in stem cells and dividing spermatogonia, while in newly formed 16-cell cysts of primary spermatocytes, it is transiently but strongly expressed before vanishing during spermatocyte growth phase.

The protein resides in the nucleus. Essential in the female germline for proper survival, sex determination and differentiation. Participates in the transcriptional activation of Otu. Does not regulate the expression of Ovo. This is Protein stand still (stil) from Drosophila melanogaster (Fruit fly).